Consider the following 152-residue polypeptide: Transcriptional regulator MraZ (152 aa).

SpoVT-AbrB domains are found at residues 5–52 (VTSI…PLHE) and 81–124 (ATEC…QDKQ).

Belongs to the MraZ family. As to quaternary structure, forms oligomers.

It localises to the cytoplasm. The protein resides in the nucleoid. The protein is Transcriptional regulator MraZ of Actinobacillus pleuropneumoniae serotype 5b (strain L20).